The primary structure comprises 254 residues: tRNA (guanine-N(1)-)-methyltransferase (254 aa).

Residues G113 and 133–138 (LGDFVL) contribute to the S-adenosyl-L-methionine site.

Belongs to the RNA methyltransferase TrmD family. As to quaternary structure, homodimer.

It is found in the cytoplasm. The enzyme catalyses guanosine(37) in tRNA + S-adenosyl-L-methionine = N(1)-methylguanosine(37) in tRNA + S-adenosyl-L-homocysteine + H(+). Specifically methylates guanosine-37 in various tRNAs. In Herpetosiphon aurantiacus (strain ATCC 23779 / DSM 785 / 114-95), this protein is tRNA (guanine-N(1)-)-methyltransferase.